Consider the following 31-residue polypeptide: Photosystem I reaction center subunit XII (31 aa).

A helical transmembrane segment spans residues 7-26; that stretch reads QIYIALLTALIPAFFALKLG.

The protein belongs to the PsaM family.

The protein resides in the plastid. Its subcellular location is the chloroplast thylakoid membrane. The protein is Photosystem I reaction center subunit XII of Euglena mutabilis.